The sequence spans 281 residues: CCAAT/enhancer-binding protein epsilon (281 aa).

Residues 1–30 (MSHGTYYECEPRGGQQPLEFSGGRAGPGEL) are disordered. Lys121 is covalently cross-linked (Glycyl lysine isopeptide (Lys-Gly) (interchain with G-Cter in SUMO2)). Phosphoserine is present on Ser181. The region spanning 204 to 267 (SLEYRLRRER…DTLRNLFRQI (64 aa)) is the bZIP domain. The segment at 208–228 (RLRRERNNIAVRKSRDKAKRR) is basic motif. Residues 230–237 (LETQQKVL) form a leucine-zipper region.

The protein belongs to the bZIP family. C/EBP subfamily. Binds DNA as a homodimer and as a heterodimer. Can form stable heterodimers with CEBPA, CEBPB and CEBPD. Interacts with GATA1 and SPI1. Interacts with SMARCD2. Post-translationally, phosphorylated. In terms of tissue distribution, strongest expression occurs in promyelocyte and late-myeloblast-like cell lines.

Its subcellular location is the nucleus. In terms of biological role, transcriptional activator. C/EBP are DNA-binding proteins that recognize two different motifs: the CCAAT homology common to many promoters and the enhanced core homology common to many enhancers. Required for the promyelocyte-myelocyte transition in myeloid differentiation. This Homo sapiens (Human) protein is CCAAT/enhancer-binding protein epsilon (CEBPE).